Here is a 591-residue protein sequence, read N- to C-terminus: Guanylate-binding protein 2 (591 aa).

The segment at 1–309 (MAPEINLPGP…NAISSGDLPC (309 aa)) is GTPase domain (Globular). The region spanning 35-276 (TQPVVVVAIV…FCSYILSHSN (242 aa)) is the GB1/RHD3-type G domain. Residues 45–52 (GLYRTGKS), 181–182 (RD), and Leu245 contribute to the GTP site. A Cysteine methyl ester modification is found at Cys588. A lipid anchor (S-geranylgeranyl cysteine) is attached at Cys588. The propeptide at 589–591 (NIL) is removed in mature form.

It belongs to the TRAFAC class dynamin-like GTPase superfamily. GB1/RHD3 GTPase family. GB1 subfamily. Homodimer; homodimerization occurs upon GTP-binding and is required for the association with membranous structures. Heterodimer with other family members, including GBP1, GBP3, GBP4 and GBP5. Post-translationally, (Microbial infection) Ubiquitinated by S.flexneri IpaH9.8, leading to its degradation by the proteasome, thereby preventing its ability to promote host defense against bacterial infection. In terms of processing, isoprenylation is required for proper subcellular location.

Its subcellular location is the cytoplasmic vesicle membrane. It is found in the golgi apparatus membrane. The protein localises to the cytoplasm. It localises to the perinuclear region. The enzyme catalyses GTP + H2O = GDP + phosphate + H(+). Functionally, interferon (IFN)-inducible GTPase that plays important roles in innate immunity against a diverse range of bacterial, viral and protozoan pathogens. Hydrolyzes GTP to GMP in 2 consecutive cleavage reactions, but the major reaction product is GDP. Following infection, recruited to the pathogen-containing vacuoles or vacuole-escaped bacteria and acts as a positive regulator of inflammasome assembly by promoting the release of inflammasome ligands from bacteria. Acts by promoting lysis of pathogen-containing vacuoles, releasing pathogens into the cytosol. Following pathogen release in the cytosol, promotes recruitment of proteins that mediate bacterial cytolysis: this liberates ligands that are detected by inflammasomes, such as lipopolysaccharide (LPS) that activates the non-canonical CASP4/CASP11 inflammasome or double-stranded DNA (dsDNA) that activates the AIM2 inflammasome. Confers protection to the protozoan pathogen Toxoplasma gondii. Independently of its GTPase activity, acts as an inhibitor of various viruses infectivity, such as HIV-1, Zika and influenza A viruses, by inhibiting FURIN-mediated maturation of viral envelope proteins. This chain is Guanylate-binding protein 2, found in Homo sapiens (Human).